The sequence spans 342 residues: tRNA(Ile)-lysidine synthase (342 aa).

Position 31 to 36 (S31 to S36) interacts with ATP.

This sequence belongs to the tRNA(Ile)-lysidine synthase family.

It is found in the cytoplasm. The catalysed reaction is cytidine(34) in tRNA(Ile2) + L-lysine + ATP = lysidine(34) in tRNA(Ile2) + AMP + diphosphate + H(+). Functionally, ligates lysine onto the cytidine present at position 34 of the AUA codon-specific tRNA(Ile) that contains the anticodon CAU, in an ATP-dependent manner. Cytidine is converted to lysidine, thus changing the amino acid specificity of the tRNA from methionine to isoleucine. The protein is tRNA(Ile)-lysidine synthase of Nostoc sp. (strain PCC 7120 / SAG 25.82 / UTEX 2576).